The sequence spans 239 residues: Leucine rich adaptor protein 1 (239 aa).

LRR repeat units lie at residues 55-83 (LGDK…LVTL) and 93-114 (LLEE…QYSL). Positions 105-116 (SSLTSSQYSLTG) are enriched in low complexity. The tract at residues 105–138 (SSLTSSQYSLTGGSPGRSRRGSWDSLPDTSSTDR) is disordered. Phosphoserine is present on residues Ser118, Ser126, and Ser129.

In terms of assembly, forms a tripartite complex with CDC42BPA/CDC42BPB and MYO18A acting as an adapter connecting both. Its binding to CDC42BPA/CDC42BPB results in their activation by abolition of their negative autoregulation. Interacts with CDC42BPA and CDC42BPB. Phosphorylated.

Its subcellular location is the cytoplasm. Functionally, acts as an activator of the canonical NF-kappa-B pathway and drive the production of pro-inflammatory cytokines. Promotes the antigen (Ag)-presenting and priming function of dendritic cells via the canonical NF-kappa-B pathway. In concert with MYO18A and CDC42BPA/CDC42BPB, is involved in modulating lamellar actomyosin retrograde flow that is crucial to cell protrusion and migration. Activates CDC42BPA/CDC42BPB and targets it to actomyosin through its interaction with MYO18A, leading to MYL9/MLC2 phosphorylation and MYH9/MYH10-dependent actomyosin assembly in the lamella. In Mus musculus (Mouse), this protein is Leucine rich adaptor protein 1 (Lurap1).